Here is a 261-residue protein sequence, read N- to C-terminus: Glucosamine-6-phosphate deaminase (261 aa).

Asp67 functions as the Proton acceptor; for enolization step in the catalytic mechanism. Asn135 acts as the For ring-opening step in catalysis. Catalysis depends on His137, which acts as the Proton acceptor; for ring-opening step. Glu142 acts as the For ring-opening step in catalysis.

This sequence belongs to the glucosamine/galactosamine-6-phosphate isomerase family. NagB subfamily. In terms of assembly, homohexamer.

It catalyses the reaction alpha-D-glucosamine 6-phosphate + H2O = beta-D-fructose 6-phosphate + NH4(+). The protein operates within amino-sugar metabolism; N-acetylneuraminate degradation; D-fructose 6-phosphate from N-acetylneuraminate: step 5/5. Functionally, catalyzes the reversible isomerization-deamination of glucosamine 6-phosphate (GlcN6P) to form fructose 6-phosphate (Fru6P) and ammonium ion. This chain is Glucosamine-6-phosphate deaminase, found in Hahella chejuensis (strain KCTC 2396).